Here is a 269-residue protein sequence, read N- to C-terminus: Hydroxyethylthiazole kinase (269 aa).

Residue Met-45 participates in substrate binding. ATP-binding residues include Arg-121 and Thr-167. Residue Gly-194 participates in substrate binding.

It belongs to the Thz kinase family. Mg(2+) serves as cofactor.

It catalyses the reaction 5-(2-hydroxyethyl)-4-methylthiazole + ATP = 4-methyl-5-(2-phosphooxyethyl)-thiazole + ADP + H(+). It participates in cofactor biosynthesis; thiamine diphosphate biosynthesis; 4-methyl-5-(2-phosphoethyl)-thiazole from 5-(2-hydroxyethyl)-4-methylthiazole: step 1/1. Its function is as follows. Catalyzes the phosphorylation of the hydroxyl group of 4-methyl-5-beta-hydroxyethylthiazole (THZ). This Brevibacillus brevis (strain 47 / JCM 6285 / NBRC 100599) protein is Hydroxyethylthiazole kinase.